A 174-amino-acid polypeptide reads, in one-letter code: MEYVVARVGRPHGVRGEVTVEVRTDDPDTRFAPGAVLRTDPDRGPLTVATARWHNGTLLLTFQGVEDRTAVEGLRNTRLVVDLDDEADPDDDAWYPHQLQGLAAVTTTGTPLGTVKDLLTGGAQDVLVVTGTDGREVLVPFVTPLVPRVDVKRGKVVLSPPGGLFVELPGEPEE.

In terms of domain architecture, PRC barrel spans 91-164 (DDAWYPHQLQ…KVVLSPPGGL (74 aa)).

The protein belongs to the RimM family. In terms of assembly, binds ribosomal protein uS19.

Its subcellular location is the cytoplasm. In terms of biological role, an accessory protein needed during the final step in the assembly of 30S ribosomal subunit, possibly for assembly of the head region. Essential for efficient processing of 16S rRNA. May be needed both before and after RbfA during the maturation of 16S rRNA. It has affinity for free ribosomal 30S subunits but not for 70S ribosomes. This is Ribosome maturation factor RimM from Kineococcus radiotolerans (strain ATCC BAA-149 / DSM 14245 / SRS30216).